The chain runs to 241 residues: MIALGVNIDHVATLRQARGTRYPDPVEAAFVAERAGADAITAHLREDRRHIVERDVEILSQTLRTRLNLEMAVEEGVLRVAERLSPSDCCLVPERRAELTTEGGLDVAGQLSRIKEACQRLAAAKVRVSLFVDPDPFQLEAAMETGAPVVELHTGRYANTADTATRAEELGQITSAASFADSLGLQVNAGHGLDYHNVQAVAAIPYIRELNIGHAIVAHAVFVGMATAVADMKRLMLEARG.

Residue N7 participates in 3-amino-2-oxopropyl phosphate binding. A 1-deoxy-D-xylulose 5-phosphate-binding site is contributed by 9–10 (DH). R18 lines the 3-amino-2-oxopropyl phosphate pocket. H43 acts as the Proton acceptor in catalysis. 1-deoxy-D-xylulose 5-phosphate-binding residues include R45 and H50. E70 acts as the Proton acceptor in catalysis. T100 provides a ligand contact to 1-deoxy-D-xylulose 5-phosphate. H191 acts as the Proton donor in catalysis. Residues G192 and 213–214 (GH) each bind 3-amino-2-oxopropyl phosphate.

This sequence belongs to the PNP synthase family. Homooctamer; tetramer of dimers.

The protein localises to the cytoplasm. The catalysed reaction is 3-amino-2-oxopropyl phosphate + 1-deoxy-D-xylulose 5-phosphate = pyridoxine 5'-phosphate + phosphate + 2 H2O + H(+). It functions in the pathway cofactor biosynthesis; pyridoxine 5'-phosphate biosynthesis; pyridoxine 5'-phosphate from D-erythrose 4-phosphate: step 5/5. Catalyzes the complicated ring closure reaction between the two acyclic compounds 1-deoxy-D-xylulose-5-phosphate (DXP) and 3-amino-2-oxopropyl phosphate (1-amino-acetone-3-phosphate or AAP) to form pyridoxine 5'-phosphate (PNP) and inorganic phosphate. The chain is Pyridoxine 5'-phosphate synthase from Acidithiobacillus ferrooxidans (strain ATCC 23270 / DSM 14882 / CIP 104768 / NCIMB 8455) (Ferrobacillus ferrooxidans (strain ATCC 23270)).